We begin with the raw amino-acid sequence, 313 residues long: Oxaloacetate tautomerase Fahd2a, mitochondrial (313 aa).

The N-terminal 84 residues, 1-84 (MLGSGRRRLL…TALSVARRAL (84 aa)), are a transit peptide targeting the mitochondrion. Mg(2+) contacts are provided by Glu159, Glu161, and Asp190. An N6-acetyllysine; alternate modification is found at Lys202. N6-succinyllysine; alternate is present on Lys202. Residue Lys233 is modified to N6-acetyllysine.

This sequence belongs to the FAH family. The cofactor is Mg(2+). Mn(2+) is required as a cofactor.

The protein resides in the mitochondrion. It catalyses the reaction oxaloacetate = enol-oxaloacetate. Its function is as follows. Tautomerase that converts enol-oxaloacetate, a strong inhibitor of succinate dehydrogenase, to the physiological keto form of oxaloacetate. It is thereby required to maximize aerobic respiration efficiency by preventing succinate dehydrogenase inhibition. This Rattus norvegicus (Rat) protein is Oxaloacetate tautomerase Fahd2a, mitochondrial.